The following is a 387-amino-acid chain: Type 2 DNA topoisomerase 6 subunit A (387 aa).

The region spanning 12–160 (EARKKAADTL…MLILSKEKGK (149 aa)) is the Topo IIA-type catalytic domain. The active-site O-(5'-phospho-DNA)-tyrosine intermediate is Tyr106. Mg(2+)-binding residues include Glu207 and Asp259.

The protein belongs to the TOP6A family. Homodimer. Heterotetramer of two Top6A and two Top6B chains. Requires Mg(2+) as cofactor.

It catalyses the reaction ATP-dependent breakage, passage and rejoining of double-stranded DNA.. In terms of biological role, relaxes both positive and negative superturns and exhibits a strong decatenase activity. The protein is Type 2 DNA topoisomerase 6 subunit A of Sulfurisphaera tokodaii (strain DSM 16993 / JCM 10545 / NBRC 100140 / 7) (Sulfolobus tokodaii).